A 208-amino-acid chain; its full sequence is Small ribosomal subunit protein uS4 (208 aa).

Residues 95–159 (TIIDNIVYRA…LKKLIGSNIE (65 aa)) enclose the S4 RNA-binding domain.

The protein belongs to the universal ribosomal protein uS4 family. Part of the 30S ribosomal subunit. Contacts protein S5. The interaction surface between S4 and S5 is involved in control of translational fidelity.

One of the primary rRNA binding proteins, it binds directly to 16S rRNA where it nucleates assembly of the body of the 30S subunit. In terms of biological role, with S5 and S12 plays an important role in translational accuracy. The protein is Small ribosomal subunit protein uS4 of Borreliella afzelii (strain PKo) (Borrelia afzelii).